A 204-amino-acid polypeptide reads, in one-letter code: Guanylate kinase (204 aa).

In terms of domain architecture, Guanylate kinase-like spans 6-184 (GLLIVLSGPA…AVDRIKAIVT (179 aa)). ATP is bound at residue 13–20 (GPAGVGKG).

This sequence belongs to the guanylate kinase family.

The protein localises to the cytoplasm. The enzyme catalyses GMP + ATP = GDP + ADP. Functionally, essential for recycling GMP and indirectly, cGMP. The sequence is that of Guanylate kinase (gmk) from Halalkalibacterium halodurans (strain ATCC BAA-125 / DSM 18197 / FERM 7344 / JCM 9153 / C-125) (Bacillus halodurans).